We begin with the raw amino-acid sequence, 433 residues long: Phosphomethylpyrimidine synthase (433 aa).

Residues asparagine 68, methionine 97, tyrosine 126, histidine 162, 184–186 (SRG), 225–228 (DALR), and glutamate 264 each bind substrate. Zn(2+) is bound at residue histidine 268. Residue tyrosine 291 participates in substrate binding. Position 332 (histidine 332) interacts with Zn(2+). Cysteine 408, cysteine 411, and cysteine 415 together coordinate [4Fe-4S] cluster.

Belongs to the ThiC family. Requires [4Fe-4S] cluster as cofactor.

It catalyses the reaction 5-amino-1-(5-phospho-beta-D-ribosyl)imidazole + S-adenosyl-L-methionine = 4-amino-2-methyl-5-(phosphooxymethyl)pyrimidine + CO + 5'-deoxyadenosine + formate + L-methionine + 3 H(+). The protein operates within cofactor biosynthesis; thiamine diphosphate biosynthesis. Functionally, catalyzes the synthesis of the hydroxymethylpyrimidine phosphate (HMP-P) moiety of thiamine from aminoimidazole ribotide (AIR) in a radical S-adenosyl-L-methionine (SAM)-dependent reaction. This chain is Phosphomethylpyrimidine synthase, found in Fusobacterium nucleatum subsp. nucleatum (strain ATCC 25586 / DSM 15643 / BCRC 10681 / CIP 101130 / JCM 8532 / KCTC 2640 / LMG 13131 / VPI 4355).